The following is a 111-amino-acid chain: Large ribosomal subunit protein uL24 (111 aa).

The disordered stretch occupies residues 43–62 (TRHKKKDQTTKRAAKQSTGK).

Belongs to the universal ribosomal protein uL24 family. Part of the 50S ribosomal subunit.

One of two assembly initiator proteins, it binds directly to the 5'-end of the 23S rRNA, where it nucleates assembly of the 50S subunit. Its function is as follows. One of the proteins that surrounds the polypeptide exit tunnel on the outside of the subunit. The polypeptide is Large ribosomal subunit protein uL24 (Mycoplasma pneumoniae (strain ATCC 29342 / M129 / Subtype 1) (Mycoplasmoides pneumoniae)).